Here is a 101-residue protein sequence, read N- to C-terminus: Citrate lyase acyl carrier protein (101 aa).

At Ser-14 the chain carries O-(phosphoribosyl dephospho-coenzyme A)serine.

It belongs to the CitD family. As to quaternary structure, oligomer with a subunit composition of (alpha,beta,gamma)6.

Its subcellular location is the cytoplasm. Functionally, covalent carrier of the coenzyme of citrate lyase. The polypeptide is Citrate lyase acyl carrier protein (Clostridium perfringens (strain 13 / Type A)).